A 464-amino-acid polypeptide reads, in one-letter code: tRNA-2-methylthio-N(6)-dimethylallyladenosine synthase (464 aa).

In terms of domain architecture, MTTase N-terminal spans Gly-19–Leu-135. 6 residues coordinate [4Fe-4S] cluster: Cys-28, Cys-64, Cys-98, Cys-170, Cys-174, and Cys-177. The Radical SAM core domain maps to Arg-156 to Arg-394. The TRAM domain occupies Lys-396 to Leu-464.

Belongs to the methylthiotransferase family. MiaB subfamily. In terms of assembly, monomer. It depends on [4Fe-4S] cluster as a cofactor.

It is found in the cytoplasm. It catalyses the reaction N(6)-dimethylallyladenosine(37) in tRNA + (sulfur carrier)-SH + AH2 + 2 S-adenosyl-L-methionine = 2-methylsulfanyl-N(6)-dimethylallyladenosine(37) in tRNA + (sulfur carrier)-H + 5'-deoxyadenosine + L-methionine + A + S-adenosyl-L-homocysteine + 2 H(+). Functionally, catalyzes the methylthiolation of N6-(dimethylallyl)adenosine (i(6)A), leading to the formation of 2-methylthio-N6-(dimethylallyl)adenosine (ms(2)i(6)A) at position 37 in tRNAs that read codons beginning with uridine. The chain is tRNA-2-methylthio-N(6)-dimethylallyladenosine synthase from Prochlorococcus marinus (strain AS9601).